We begin with the raw amino-acid sequence, 2111 residues long: Glutamate synthase [NADH] (2111 aa).

Residue Cys69 is the Nucleophile of the active site. Residues 69–469 (CGVGFTCHIK…PGRMLLVDTK (401 aa)) enclose the Glutamine amidotransferase type-2 domain. The tract at residues 969–990 (GGKSNTGEGGEDPARSQRLANG) is disordered. 1139-1191 (VAETHQTLVLNDLRGRVVIQTDGQIRTGRDVAIACLLGAEEWGFATTPLIALG) contributes to the FMN binding site. [3Fe-4S] cluster-binding residues include Cys1192, Cys1198, and Cys1203.

The protein belongs to the glutamate synthase family. Homotrimer. [3Fe-4S] cluster is required as a cofactor. Requires FAD as cofactor. It depends on FMN as a cofactor.

It is found in the cytoplasm. The enzyme catalyses 2 L-glutamate + NAD(+) = L-glutamine + 2-oxoglutarate + NADH + H(+). The protein operates within amino-acid biosynthesis; L-glutamate biosynthesis via GLT pathway; L-glutamate from 2-oxoglutarate and L-glutamine (NAD(+) route): step 1/1. It participates in energy metabolism; nitrogen metabolism. In the presence of 10 mM allantoin, the activity is reduced more than 25%. Forms L-glutamate from L-glutamine and 2-oxoglutarate. Represents an alternative pathway to L-glutamate dehydrogenase for the biosynthesis of L-glutamate. Participates with glutamine synthetase in ammonia assimilation processes. The enzyme is specific for NADH, L-glutamine and 2-oxoglutarate. In Schizosaccharomyces pombe (strain 972 / ATCC 24843) (Fission yeast), this protein is Glutamate synthase [NADH] (glt1).